We begin with the raw amino-acid sequence, 180 residues long: MAELATIARPYAEALYKACTDQAGVDLNGATAWVDELAAIAANPQLRQLADNPKVTGEQVFDVIVGVARSALPDLAKNFLRTVIDNGRVQALPEIAAQFRTLVNRSHGTSDAVVYSAFPLDAGALTDVGATLEKRFGRKLNLSVQLDETLIGGVRVVVGDEVLDTSVKARLEQMKAALTA.

It belongs to the ATPase delta chain family. As to quaternary structure, F-type ATPases have 2 components, F(1) - the catalytic core - and F(0) - the membrane proton channel. F(1) has five subunits: alpha(3), beta(3), gamma(1), delta(1), epsilon(1). F(0) has three main subunits: a(1), b(2) and c(10-14). The alpha and beta chains form an alternating ring which encloses part of the gamma chain. F(1) is attached to F(0) by a central stalk formed by the gamma and epsilon chains, while a peripheral stalk is formed by the delta and b chains.

It is found in the cell inner membrane. Its function is as follows. F(1)F(0) ATP synthase produces ATP from ADP in the presence of a proton or sodium gradient. F-type ATPases consist of two structural domains, F(1) containing the extramembraneous catalytic core and F(0) containing the membrane proton channel, linked together by a central stalk and a peripheral stalk. During catalysis, ATP synthesis in the catalytic domain of F(1) is coupled via a rotary mechanism of the central stalk subunits to proton translocation. Functionally, this protein is part of the stalk that links CF(0) to CF(1). It either transmits conformational changes from CF(0) to CF(1) or is implicated in proton conduction. This Acidovorax sp. (strain JS42) protein is ATP synthase subunit delta.